Consider the following 429-residue polypeptide: 3-phosphoshikimate 1-carboxyvinyltransferase (429 aa).

3-phosphoshikimate-binding residues include Lys-23, Ser-24, and Arg-28. Lys-23 lines the phosphoenolpyruvate pocket. Positions 94 and 126 each coordinate phosphoenolpyruvate. 7 residues coordinate 3-phosphoshikimate: Ser-171, Ser-172, Gln-173, Ser-199, Asp-316, Asn-339, and Lys-343. Gln-173 is a phosphoenolpyruvate binding site. The Proton acceptor role is filled by Asp-316. Phosphoenolpyruvate is bound by residues Arg-347, Arg-389, and Lys-414.

It belongs to the EPSP synthase family. In terms of assembly, monomer.

The protein localises to the cytoplasm. It catalyses the reaction 3-phosphoshikimate + phosphoenolpyruvate = 5-O-(1-carboxyvinyl)-3-phosphoshikimate + phosphate. It participates in metabolic intermediate biosynthesis; chorismate biosynthesis; chorismate from D-erythrose 4-phosphate and phosphoenolpyruvate: step 6/7. Its function is as follows. Catalyzes the transfer of the enolpyruvyl moiety of phosphoenolpyruvate (PEP) to the 5-hydroxyl of shikimate-3-phosphate (S3P) to produce enolpyruvyl shikimate-3-phosphate and inorganic phosphate. The polypeptide is 3-phosphoshikimate 1-carboxyvinyltransferase (Idiomarina loihiensis (strain ATCC BAA-735 / DSM 15497 / L2-TR)).